Consider the following 494-residue polypeptide: Probable cytosol aminopeptidase (494 aa).

Lys260 and Asp265 together coordinate Mn(2+). The active site involves Lys272. Residues Asp283, Asp342, and Glu344 each contribute to the Mn(2+) site. Arg346 is a catalytic residue.

Belongs to the peptidase M17 family. Requires Mn(2+) as cofactor.

The protein localises to the cytoplasm. The catalysed reaction is Release of an N-terminal amino acid, Xaa-|-Yaa-, in which Xaa is preferably Leu, but may be other amino acids including Pro although not Arg or Lys, and Yaa may be Pro. Amino acid amides and methyl esters are also readily hydrolyzed, but rates on arylamides are exceedingly low.. It catalyses the reaction Release of an N-terminal amino acid, preferentially leucine, but not glutamic or aspartic acids.. Functionally, presumably involved in the processing and regular turnover of intracellular proteins. Catalyzes the removal of unsubstituted N-terminal amino acids from various peptides. The protein is Probable cytosol aminopeptidase of Bacillus mycoides (strain KBAB4) (Bacillus weihenstephanensis).